A 438-amino-acid chain; its full sequence is Phosphoribosylamine--glycine ligase (438 aa).

Residues 108-316 (REFMERNNIP…LLEIAKGIVE (209 aa)) enclose the ATP-grasp domain. 135-194 (IDEYGKPVVVKPLGLTGGKGVKVVGYQLKDNEEAKEYAEHIIRKDGKVLIEERTDGVEFT) lines the ATP pocket. Mg(2+)-binding residues include glutamine 274, glutamate 286, and asparagine 288. Mn(2+) is bound by residues glutamine 274, glutamate 286, and asparagine 288.

The protein belongs to the GARS family. The cofactor is Mg(2+). Mn(2+) serves as cofactor.

It catalyses the reaction 5-phospho-beta-D-ribosylamine + glycine + ATP = N(1)-(5-phospho-beta-D-ribosyl)glycinamide + ADP + phosphate + H(+). It functions in the pathway purine metabolism; IMP biosynthesis via de novo pathway; N(1)-(5-phospho-D-ribosyl)glycinamide from 5-phospho-alpha-D-ribose 1-diphosphate: step 2/2. The polypeptide is Phosphoribosylamine--glycine ligase (Pyrococcus horikoshii (strain ATCC 700860 / DSM 12428 / JCM 9974 / NBRC 100139 / OT-3)).